Consider the following 266-residue polypeptide: Apolipoprotein A-I (266 aa).

The first 18 residues, 1-18 (MKAALLTLAVLFLTGSQA), serve as a signal peptide directing secretion. 2 repeat units span residues 67 to 88 (LKLL…EQIG) and 89 to 110 (PVTQ…QEMS). The segment at 67–266 (LKLLDNWDSL…DEATKKLNAQ (200 aa)) is 10 X approximate tandem repeats. M109 is modified (methionine sulfoxide). The 3; half-length repeat unit spans residues 111–121 (KDLEEVKQKVQ). 5 repeat units span residues 122–143 (PYLD…QKVA), 144–165 (PLGS…EKLS), 166–187 (PLAE…AQLA), 188–209 (PYSD…EGGG), and 210–231 (ASLA…EKAR). The stretch at 232–242 (PALEDLRQGLL) is one 9; half-length repeat. Repeat 10 spans residues 243–266 (PVLESFKVSLLAAIDEATKKLNAQ).

Belongs to the apolipoprotein A1/A4/E family. Homodimer. Interacts with APOA1BP and CLU. Component of a sperm activating protein complex (SPAP), consisting of APOA1, an immunoglobulin heavy chain, an immunoglobulin light chain and albumin. Interacts with NDRG1. Interacts with SCGB3A2. Interacts with NAXE and YJEFN3. Post-translationally, palmitoylated. Glycosylated. In terms of processing, phosphorylation sites are present in the extracellular medium. In terms of tissue distribution, major protein of plasma HDL, also found in chylomicrons. Synthesized in the liver and small intestine.

It is found in the secreted. Its function is as follows. Participates in the reverse transport of cholesterol from tissues to the liver for excretion by promoting cholesterol efflux from tissues and by acting as a cofactor for the lecithin cholesterol acyltransferase (LCAT). As part of the SPAP complex, activates spermatozoa motility. The polypeptide is Apolipoprotein A-I (APOA1) (Canis lupus familiaris (Dog)).